The sequence spans 83 residues: Small ribosomal subunit protein bS16 (83 aa).

This sequence belongs to the bacterial ribosomal protein bS16 family.

In Pseudomonas putida (strain ATCC 700007 / DSM 6899 / JCM 31910 / BCRC 17059 / LMG 24140 / F1), this protein is Small ribosomal subunit protein bS16.